The primary structure comprises 652 residues: Phosphomethylpyrimidine synthase (652 aa).

Substrate-binding positions include Asn235, Met264, Tyr293, His329, 349-351, 390-393, and Glu429; these read SRG and DGMR. A Zn(2+)-binding site is contributed by His433. Tyr456 contributes to the substrate binding site. His497 provides a ligand contact to Zn(2+). Cys577, Cys580, and Cys585 together coordinate [4Fe-4S] cluster.

The protein belongs to the ThiC family. Homodimer. It depends on [4Fe-4S] cluster as a cofactor.

It catalyses the reaction 5-amino-1-(5-phospho-beta-D-ribosyl)imidazole + S-adenosyl-L-methionine = 4-amino-2-methyl-5-(phosphooxymethyl)pyrimidine + CO + 5'-deoxyadenosine + formate + L-methionine + 3 H(+). It participates in cofactor biosynthesis; thiamine diphosphate biosynthesis. Catalyzes the synthesis of the hydroxymethylpyrimidine phosphate (HMP-P) moiety of thiamine from aminoimidazole ribotide (AIR) in a radical S-adenosyl-L-methionine (SAM)-dependent reaction. The protein is Phosphomethylpyrimidine synthase of Shewanella woodyi (strain ATCC 51908 / MS32).